The sequence spans 237 residues: UDP-2,3-diacylglucosamine hydrolase (237 aa).

Mn(2+) is bound by residues D8, H10, D41, N78, and H113. 78 to 79 is a binding site for substrate; sequence NR. The substrate site is built by D121, S159, Q164, and H195. Residues H195 and H197 each contribute to the Mn(2+) site.

Belongs to the LpxH family. The cofactor is Mn(2+).

The protein resides in the cell inner membrane. It catalyses the reaction UDP-2-N,3-O-bis[(3R)-3-hydroxytetradecanoyl]-alpha-D-glucosamine + H2O = 2-N,3-O-bis[(3R)-3-hydroxytetradecanoyl]-alpha-D-glucosaminyl 1-phosphate + UMP + 2 H(+). It functions in the pathway glycolipid biosynthesis; lipid IV(A) biosynthesis; lipid IV(A) from (3R)-3-hydroxytetradecanoyl-[acyl-carrier-protein] and UDP-N-acetyl-alpha-D-glucosamine: step 4/6. Functionally, hydrolyzes the pyrophosphate bond of UDP-2,3-diacylglucosamine to yield 2,3-diacylglucosamine 1-phosphate (lipid X) and UMP by catalyzing the attack of water at the alpha-P atom. Involved in the biosynthesis of lipid A, a phosphorylated glycolipid that anchors the lipopolysaccharide to the outer membrane of the cell. In Chromobacterium violaceum (strain ATCC 12472 / DSM 30191 / JCM 1249 / CCUG 213 / NBRC 12614 / NCIMB 9131 / NCTC 9757 / MK), this protein is UDP-2,3-diacylglucosamine hydrolase.